A 67-amino-acid chain; its full sequence is Large ribosomal subunit protein bL35 (67 aa).

It belongs to the bacterial ribosomal protein bL35 family.

This is Large ribosomal subunit protein bL35 from Leptothrix cholodnii (strain ATCC 51168 / LMG 8142 / SP-6) (Leptothrix discophora (strain SP-6)).